We begin with the raw amino-acid sequence, 186 residues long: Elongation factor P (186 aa).

It belongs to the elongation factor P family.

It localises to the cytoplasm. It functions in the pathway protein biosynthesis; polypeptide chain elongation. Its function is as follows. Involved in peptide bond synthesis. Stimulates efficient translation and peptide-bond synthesis on native or reconstituted 70S ribosomes in vitro. Probably functions indirectly by altering the affinity of the ribosome for aminoacyl-tRNA, thus increasing their reactivity as acceptors for peptidyl transferase. The polypeptide is Elongation factor P (Prochlorococcus marinus (strain MIT 9215)).